We begin with the raw amino-acid sequence, 463 residues long: Cysteine--tRNA ligase (463 aa).

Cys-29 contributes to the Zn(2+) binding site. The short motif at 31-41 (PTVYNYAHIGN) is the 'HIGH' region element. Cys-211, His-236, and Glu-240 together coordinate Zn(2+). Residues 269–273 (KMSKS) carry the 'KMSKS' region motif. ATP is bound at residue Lys-272.

Belongs to the class-I aminoacyl-tRNA synthetase family. Monomer. Zn(2+) is required as a cofactor.

Its subcellular location is the cytoplasm. It catalyses the reaction tRNA(Cys) + L-cysteine + ATP = L-cysteinyl-tRNA(Cys) + AMP + diphosphate. The sequence is that of Cysteine--tRNA ligase from Caulobacter vibrioides (strain ATCC 19089 / CIP 103742 / CB 15) (Caulobacter crescentus).